Reading from the N-terminus, the 147-residue chain is Large ribosomal subunit protein bL9 (147 aa).

This sequence belongs to the bacterial ribosomal protein bL9 family.

In terms of biological role, binds to the 23S rRNA. The polypeptide is Large ribosomal subunit protein bL9 (Geobacter sp. (strain M21)).